The following is a 587-amino-acid chain: MAKVADKPFFPKPFLSFLVLSIIFGFGITLSEAGFPKIKHYKWDVEYMFWSPDCVENIVMGINGEFPGPTIRANAGDIVVVELTNKLHTEGVVIHWHGILQRGTPWADGTASISQCAINPGETFTYRFVVDKAGTYFYHGHLGMQRSAGLYGSLIVDPPEGRSEPFHYDEEINLLLSDWWHQSVHKQEVGLSSKPMRWIGEPQSILINGKGQFDCSIAAKYNQGLKQCELSGKEKCAPFILHVQPKKTYRIRIASTTALASLNFAIGNHELLVVEADGNYVQPFVTSDIDIYSGESYSVLITTDQNPLENYWVSIGVRARLPKTPPGLTLLNYLPNSASKLPISPPPETPHWEDFDRSKNFTFRIFAAMGSPKPPVRYNRRLFLLNTQNRINGFMKWAINNVSLALPPTPYLAAMKMRLNTAFNQNPPPETFPLNYDINNPPPNPETTTGNGVYKFNMGETVDVILQNANMLNPNMSEIHPWHLHGHDFWVLGYGEGKFYAPEDEKKLNLKNPPLRNTVVIFPYGWTAIRFVADNPGVWAFHCHIEPHLHMGMGVVFAEGVHMVGMIPPKALACGSTALVKNYPRLP.

The N-terminal stretch at 1-33 (MAKVADKPFFPKPFLSFLVLSIIFGFGITLSEA) is a signal peptide. Plastocyanin-like domains are found at residues 38 to 157 (IKHY…LIVD) and 169 to 335 (DEEI…NYLP). Disulfide bonds link C54/C236, C116/C574, and C215/C228. H95, H97, H139, and H141 together coordinate Cu cation. N360, N401, and N475 each carry an N-linked (GlcNAc...) asparagine glycan. Positions 379-559 (NRRLFLLNTQ…HMGMGVVFAE (181 aa)) constitute a Plastocyanin-like 3 domain. Positions 480, 483, 485, 542, 543, 544, 548, and 553 each coordinate Cu cation.

It belongs to the multicopper oxidase family. Dimer. Requires Cu cation as cofactor.

It is found in the secreted. It carries out the reaction 4 L-ascorbate + O2 = 4 monodehydro-L-ascorbate radical + 2 H2O. Its function is as follows. May be involved in a redox system involving ascorbic acid. The polypeptide is L-ascorbate oxidase (Cucumis sativus (Cucumber)).